A 509-amino-acid polypeptide reads, in one-letter code: Mitogen-activated protein kinase sma-5 (509 aa).

The segment at 19–72 is disordered; that stretch reads DPITSMSPPQENRSPKAEYLNNFFNTNPTNGKSRGSQEAPRKPLGQTNLNVQGS. Polar residues-rich tracts occupy residues 20–30 and 40–54; these read PITSMSPPQEN and NFFNTNPTNGKSRGS. The region spanning 105–411 is the Protein kinase domain; that stretch reads YEPTQNIGSG…IQDALLHPYI (307 aa). ATP contacts are provided by residues 111 to 119 and Lys134; that span reads IGSGAFGIV. Residue Asp231 is the Proton acceptor of the active site. Residues 460 to 482 are disordered; sequence YSELHSGDSTGSTSDMSTNTSGE. Residues 466 to 481 show a composition bias toward low complexity; it reads GDSTGSTSDMSTNTSG.

It belongs to the protein kinase superfamily. CMGC Ser/Thr protein kinase family. MAP kinase subfamily. Mg(2+) serves as cofactor. As to expression, expressed in intestine with a stronger expression in the four most anterior cells, muscles, excretory cell, pharynx and, to a lesser extent, in hypodermis.

It catalyses the reaction L-seryl-[protein] + ATP = O-phospho-L-seryl-[protein] + ADP + H(+). It carries out the reaction L-threonyl-[protein] + ATP = O-phospho-L-threonyl-[protein] + ADP + H(+). Serine/threonine-protein kinase involved in the postembryonic regulation of body size, mainly through control of cell growth. In particular, controls the volume of intestine, muscles and hypodermis. In addition, regulates growth, intestinal granule distribution, lifespan and number of offspring. This is Mitogen-activated protein kinase sma-5 from Caenorhabditis elegans.